The sequence spans 804 residues: Probable replication endonuclease from prophage-like region 2 (804 aa).

Residues Y503 and Y507 each act as O-(5'-phospho-DNA)-tyrosine intermediate in the active site.

The protein belongs to the phage GPA family.

Possible endonuclease which induces a single-strand cut and initiates DNA replication. This Salmonella typhi protein is Probable replication endonuclease from prophage-like region 2.